The sequence spans 534 residues: Probable RNA-binding protein 46 (534 aa).

3 consecutive RRM domains span residues 61 to 139, 141 to 223, and 236 to 308; these read CEVF…VSLD, CRLF…WASP, and KVLY…LAKP.

It localises to the cytoplasm. Functionally, essential for male and female fertility, playing a crucial role in regulating germ cell development by ensuring the proper progression of meiosis prophase I. This Xenopus tropicalis (Western clawed frog) protein is Probable RNA-binding protein 46 (rbm46).